Here is a 204-residue protein sequence, read N- to C-terminus: Ribonuclease HII (204 aa).

The RNase H type-2 domain maps to 8–197; the sequence is RLICGVDEAG…VRELLQNPPL (190 aa). Asp14, Glu15, and Asp106 together coordinate a divalent metal cation.

This sequence belongs to the RNase HII family. Mn(2+) is required as a cofactor. Requires Mg(2+) as cofactor.

The protein localises to the cytoplasm. The catalysed reaction is Endonucleolytic cleavage to 5'-phosphomonoester.. Its function is as follows. Endonuclease that specifically degrades the RNA of RNA-DNA hybrids. This is Ribonuclease HII from Azoarcus sp. (strain BH72).